Reading from the N-terminus, the 175-residue chain is Disulfide bond formation protein B (175 aa).

At 1-13 the chain is on the cytoplasmic side; the sequence is MSKLVTFSQQRSA. Residues 14 to 30 traverse the membrane as a helical segment; sequence WLILMFSALGLEASALY. Residues 31–48 are Periplasmic-facing; that stretch reads FQYVMLLDPCVMCIYIRV. Cys40 and Cys43 form a disulfide bridge. A helical membrane pass occupies residues 49 to 64; it reads AVLGLILAGLVGSIAP. Over 65–71 the chain is Cytoplasmic; that stretch reads RFWIVRF. Residues 72–89 form a helical membrane-spanning segment; sequence LGMSLWGVSSAWGAKLSF. Topologically, residues 90 to 144 are periplasmic; sequence ELYQMQANPSPFSTCSFYPEFPTWMPLDAWMPSIFMPTGMCSDIPWTMMSLSMTQ. A disulfide bridge links Cys104 with Cys130. A helical transmembrane segment spans residues 145–163; sequence WTLIAFVGYSIAFLLFIYP. At 164–175 the chain is on the cytoplasmic side; it reads GLLYKKPTNPYS.

It belongs to the DsbB family.

The protein localises to the cell inner membrane. Required for disulfide bond formation in some periplasmic proteins. Acts by oxidizing the DsbA protein. This chain is Disulfide bond formation protein B, found in Shewanella denitrificans (strain OS217 / ATCC BAA-1090 / DSM 15013).